The chain runs to 421 residues: Testin (421 aa).

A PET domain is found at 92-199; the sequence is MILTNPVAAK…GDVKLPQEMD (108 aa). 3 consecutive LIM zinc-binding domains span residues 234–297, 299–359, and 362–421; these read YSCY…CDSE, PRCA…NHAV, and QGCH…KMMS.

It belongs to the prickle / espinas / testin family. As to quaternary structure, interacts via LIM domain 1 with ZYX. Interacts (via LIM domain 3) with ENAH and VASP. Interacts with ALKBH4, talin, actin, alpha-actinin, GRIP1 and PXN. Interacts (via LIM domain 2) with ACTL7A (via N-terminus). Heterodimer with ACTL7A; the heterodimer interacts with ENAH to form a heterotrimer.

The protein localises to the cytoplasm. It is found in the cell junction. The protein resides in the focal adhesion. In terms of biological role, scaffold protein that may play a role in cell adhesion, cell spreading and in the reorganization of the actin cytoskeleton. Plays a role in the regulation of cell proliferation. May act as a tumor suppressor. This Loxodonta africana (African elephant) protein is Testin (TES).